The following is a 183-amino-acid chain: Adenine phosphoribosyltransferase (183 aa).

This sequence belongs to the purine/pyrimidine phosphoribosyltransferase family. Homodimer.

Its subcellular location is the cytoplasm. It carries out the reaction AMP + diphosphate = 5-phospho-alpha-D-ribose 1-diphosphate + adenine. The protein operates within purine metabolism; AMP biosynthesis via salvage pathway; AMP from adenine: step 1/1. Functionally, catalyzes a salvage reaction resulting in the formation of AMP, that is energically less costly than de novo synthesis. The polypeptide is Adenine phosphoribosyltransferase (Photorhabdus laumondii subsp. laumondii (strain DSM 15139 / CIP 105565 / TT01) (Photorhabdus luminescens subsp. laumondii)).